The chain runs to 316 residues: Phosphate acetyltransferase (316 aa).

Belongs to the phosphate acetyltransferase and butyryltransferase family.

Its subcellular location is the cytoplasm. It catalyses the reaction acetyl-CoA + phosphate = acetyl phosphate + CoA. The protein operates within metabolic intermediate biosynthesis; acetyl-CoA biosynthesis; acetyl-CoA from acetate: step 2/2. This Rhizobium meliloti (Ensifer meliloti) protein is Phosphate acetyltransferase (pta).